The sequence spans 293 residues: 4-hydroxy-tetrahydrodipicolinate synthase (293 aa).

Residue Thr44 coordinates pyruvate. Tyr132 (proton donor/acceptor) is an active-site residue. Lys162 serves as the catalytic Schiff-base intermediate with substrate. Residue Ile204 coordinates pyruvate.

It belongs to the DapA family. Homotetramer; dimer of dimers.

The protein resides in the cytoplasm. The enzyme catalyses L-aspartate 4-semialdehyde + pyruvate = (2S,4S)-4-hydroxy-2,3,4,5-tetrahydrodipicolinate + H2O + H(+). It participates in amino-acid biosynthesis; L-lysine biosynthesis via DAP pathway; (S)-tetrahydrodipicolinate from L-aspartate: step 3/4. Its function is as follows. Catalyzes the condensation of (S)-aspartate-beta-semialdehyde [(S)-ASA] and pyruvate to 4-hydroxy-tetrahydrodipicolinate (HTPA). This is 4-hydroxy-tetrahydrodipicolinate synthase from Erythrobacter litoralis (strain HTCC2594).